We begin with the raw amino-acid sequence, 775 residues long: Glycerol-3-phosphate acyltransferase (775 aa).

Positions 268–273 match the HXXXXD motif motif; it reads HRSYID.

The protein belongs to the GPAT/DAPAT family.

It localises to the cell membrane. The catalysed reaction is sn-glycerol 3-phosphate + an acyl-CoA = a 1-acyl-sn-glycero-3-phosphate + CoA. It functions in the pathway phospholipid metabolism; CDP-diacylglycerol biosynthesis; CDP-diacylglycerol from sn-glycerol 3-phosphate: step 1/3. The chain is Glycerol-3-phosphate acyltransferase (plsB) from Mycobacterium leprae (strain TN).